The following is a 271-amino-acid chain: Formamidopyrimidine-DNA glycosylase (271 aa).

Pro2 acts as the Schiff-base intermediate with DNA in catalysis. Glu3 acts as the Proton donor in catalysis. The active-site Proton donor; for beta-elimination activity is Lys57. DNA is bound by residues His90, Arg109, and Lys151. Residues 236–270 (HVYGRGGETCTSCGNLLSEIRLGQRTTVFCGICQT) form an FPG-type zinc finger. The active-site Proton donor; for delta-elimination activity is Arg260.

Belongs to the FPG family. As to quaternary structure, monomer. Requires Zn(2+) as cofactor.

It catalyses the reaction Hydrolysis of DNA containing ring-opened 7-methylguanine residues, releasing 2,6-diamino-4-hydroxy-5-(N-methyl)formamidopyrimidine.. The enzyme catalyses 2'-deoxyribonucleotide-(2'-deoxyribose 5'-phosphate)-2'-deoxyribonucleotide-DNA = a 3'-end 2'-deoxyribonucleotide-(2,3-dehydro-2,3-deoxyribose 5'-phosphate)-DNA + a 5'-end 5'-phospho-2'-deoxyribonucleoside-DNA + H(+). Functionally, involved in base excision repair of DNA damaged by oxidation or by mutagenic agents. Acts as a DNA glycosylase that recognizes and removes damaged bases. Has a preference for oxidized purines, such as 7,8-dihydro-8-oxoguanine (8-oxoG). Has AP (apurinic/apyrimidinic) lyase activity and introduces nicks in the DNA strand. Cleaves the DNA backbone by beta-delta elimination to generate a single-strand break at the site of the removed base with both 3'- and 5'-phosphates. The sequence is that of Formamidopyrimidine-DNA glycosylase from Shewanella sp. (strain W3-18-1).